Here is a 94-residue protein sequence, read N- to C-terminus: Neutrophil antibiotic peptide NP-2 (94 aa).

The first 19 residues, 1-19 (MRTLTLLTALLLLALHTQA), serve as a signal peptide directing secretion. Positions 20-62 (KSPQGTAEEAPDQEQLVMEDQDISISFGGDKGTALQDADVKAG) are excised as a propeptide. Cystine bridges form between Cys-65-Cys-93, Cys-67-Cys-82, and Cys-72-Cys-92.

It belongs to the alpha-defensin family. In terms of tissue distribution, highest expression in bone marrow and to a much lesser extent in small intestine.

Its subcellular location is the secreted. In terms of biological role, active in vitro against S.aureus, fungi, Gram-positive and Gram-negative bacteria and to a lesser extent against an enveloped virus. This is Neutrophil antibiotic peptide NP-2 (Defa) from Rattus norvegicus (Rat).